Consider the following 103-residue polypeptide: Putative RNA-binding protein RbpB (103 aa).

Residues 2 to 79 form the RRM domain; the sequence is SIYVGNLSYD…RDLKVNKAKP (78 aa). Over residues 74-85 the composition is skewed to basic and acidic residues; sequence VNKAKPREDRGG. Positions 74 to 103 are disordered; it reads VNKAKPREDRGGSRGSFGGNRSNNNFRNRY. Over residues 92–103 the composition is skewed to low complexity; sequence GNRSNNNFRNRY.

The chain is Putative RNA-binding protein RbpB (rbpB) from Nostoc sp. (strain PCC 7120 / SAG 25.82 / UTEX 2576).